Reading from the N-terminus, the 368-residue chain is DNA replication and repair protein RecF (368 aa).

30–37 (GNNAQGKT) is an ATP binding site.

This sequence belongs to the RecF family.

It localises to the cytoplasm. Functionally, the RecF protein is involved in DNA metabolism; it is required for DNA replication and normal SOS inducibility. RecF binds preferentially to single-stranded, linear DNA. It also seems to bind ATP. The polypeptide is DNA replication and repair protein RecF (Streptococcus pyogenes serotype M5 (strain Manfredo)).